We begin with the raw amino-acid sequence, 230 residues long: Stachydrine N-demethylase reductase subunit Stc3 (230 aa).

It belongs to the non-flavoprotein flavin reductase family. The system is probably composed of an oxygenase subunit (Stc2) and two reductase subunits (Stc3 and Stc4).

In terms of biological role, reductase involved in the catabolism of stachydrine (L-proline betaine), a source of carbon and nitrogen. Part of a Rieske-type oxygenase system that catalyzes the demethylation of stachydrine to produce N-methyl-L-proline (monomethylproline). This subunit is probably involved in the transfer of electrons from NAD(P)H to the catalytic subunit Stc2. The polypeptide is Stachydrine N-demethylase reductase subunit Stc3 (Rhizobium meliloti (strain 1021) (Ensifer meliloti)).